The chain runs to 411 residues: Putative nickel insertion protein (411 aa).

It belongs to the LarC family.

This chain is Putative nickel insertion protein, found in Acaryochloris marina (strain MBIC 11017).